A 180-amino-acid polypeptide reads, in one-letter code: Large ribosomal subunit protein uL6 (180 aa).

Belongs to the universal ribosomal protein uL6 family. In terms of assembly, part of the 50S ribosomal subunit.

Functionally, this protein binds to the 23S rRNA, and is important in its secondary structure. It is located near the subunit interface in the base of the L7/L12 stalk, and near the tRNA binding site of the peptidyltransferase center. This Prosthecochloris aestuarii (strain DSM 271 / SK 413) protein is Large ribosomal subunit protein uL6.